The primary structure comprises 315 residues: Calumenin (315 aa).

The first 19 residues, 1 to 19, serve as a signal peptide directing secretion; that stretch reads MDLRQFLMCLSLCTAFALS. Tyr47 carries the phosphotyrosine modification. At Thr65 the chain carries Phosphothreonine. 6 EF-hand domains span residues 68–103, 104–139, 151–186, 188–223, 229–264, and 265–300; these read ESKE…AQKK, YIYD…TYLD, PIMV…EEYD, MKDI…HDGN, WVKT…SDYD, and HAEA…FVGS. At Ser69 the chain carries Phosphoserine. Residues Asp81, Asp83, Asp85, Glu92, Asp117, Asn119, Asp121, and Glu128 each coordinate Ca(2+). Asn131 carries an N-linked (GlcNAc...) asparagine glycan. Positions 164, 166, 168, 175, 201, 203, 205, 212, 242, 244, 246, 248, and 253 each coordinate Ca(2+). Position 254 is a phosphothreonine (Thr254). Ser261 and Ser277 each carry phosphoserine. Ca(2+) is bound by residues Asp278, Asp280, Asp282, Lys284, and Glu289. The Prevents secretion from ER motif lies at 312 to 315; it reads HDEF.

This sequence belongs to the CREC family. As to quaternary structure, binds crotoxin. Interacts with GGCX.

The protein localises to the endoplasmic reticulum membrane. The protein resides in the golgi apparatus. Its subcellular location is the secreted. It is found in the melanosome. It localises to the sarcoplasmic reticulum lumen. Involved in regulation of vitamin K-dependent carboxylation of multiple N-terminal glutamate residues. Seems to inhibit gamma-carboxylase GGCX. Binds 7 calcium ions with a low affinity. This Rattus norvegicus (Rat) protein is Calumenin (Calu).